The following is a 119-amino-acid chain: Ribosome-binding factor A (119 aa).

Belongs to the RbfA family. Monomer. Binds 30S ribosomal subunits, but not 50S ribosomal subunits or 70S ribosomes.

The protein resides in the cytoplasm. In terms of biological role, one of several proteins that assist in the late maturation steps of the functional core of the 30S ribosomal subunit. Associates with free 30S ribosomal subunits (but not with 30S subunits that are part of 70S ribosomes or polysomes). Required for efficient processing of 16S rRNA. May interact with the 5'-terminal helix region of 16S rRNA. In Coxiella burnetii (strain CbuG_Q212) (Coxiella burnetii (strain Q212)), this protein is Ribosome-binding factor A.